A 274-amino-acid polypeptide reads, in one-letter code: 2,3,4,5-tetrahydropyridine-2,6-dicarboxylate N-succinyltransferase (274 aa).

This sequence belongs to the transferase hexapeptide repeat family.

It localises to the cytoplasm. It catalyses the reaction (S)-2,3,4,5-tetrahydrodipicolinate + succinyl-CoA + H2O = (S)-2-succinylamino-6-oxoheptanedioate + CoA. It functions in the pathway amino-acid biosynthesis; L-lysine biosynthesis via DAP pathway; LL-2,6-diaminopimelate from (S)-tetrahydrodipicolinate (succinylase route): step 1/3. This Alteromonas mediterranea (strain DSM 17117 / CIP 110805 / LMG 28347 / Deep ecotype) protein is 2,3,4,5-tetrahydropyridine-2,6-dicarboxylate N-succinyltransferase.